The sequence spans 149 residues: Glycophorin-A (149 aa).

The N-terminal stretch at 1 to 19 is a signal peptide; sequence MYGKIIFVLLLSAIVSISA. The Extracellular segment spans residues 20 to 90; that stretch reads SSTTEVAMHT…QLVHRFSEPE (71 aa). Ser21 is a glycosylation site (O-linked (GalNAc...) serine). O-linked (GalNAc...) threonine glycans are attached at residues Thr22, Thr23, and Thr29. A glycan (O-linked (GalNAc...) serine) is linked at Ser30. Thr31 carries O-linked (GalNAc...) threonine glycosylation. The O-linked (GalNAc...) serine glycan is linked to Ser32. Residue Thr35 is glycosylated (O-linked (GalNAc...) threonine). 2 O-linked (GalNAc...) serine glycosylation sites follow: Ser37 and Ser40. Thr43 carries O-linked (GalNAc...) threonine glycosylation. Ser44 is a glycosylation site (O-linked (GalNAc...) serine). O-linked (GalNAc...) threonine glycosylation is found at Thr51 and Thr55. O-linked (GalNAc...) serine glycosylation occurs at Ser62. Thr68 carries O-linked (GalNAc...) threonine glycosylation. A helical membrane pass occupies residues 91 to 113; it reads ITLIIFGVMAGVIGTILLIYYSI. Topologically, residues 114–149 are cytoplasmic; sequence RRLIKKSPSDVKPLPSPDTDVPLSSVEIENPETSDQ. Residues 122 to 149 form a disordered region; sequence SDVKPLPSPDTDVPLSSVEIENPETSDQ. 2 positions are modified to phosphoserine: Ser137 and Ser147.

The protein belongs to the glycophorin-A family. Homodimer. Component of the ankyrin-1 complex in the erythrocyte, composed of ANK1, RHCE, RHAG, SLC4A1, EPB42, GYPA, GYPB and AQP1. Interacts with SLC4A1; a GYPA monomer is bound at each end of the SLC4A1 dimer forming a heterotetramer.

Its subcellular location is the cell membrane. In terms of biological role, component of the ankyrin-1 complex, a multiprotein complex involved in the stability and shape of the erythrocyte membrane. Glycophorin A is the major intrinsic membrane protein of the erythrocyte. The N-terminal glycosylated segment, which lies outside the erythrocyte membrane, has MN blood group receptors. Appears to be important for the function of SLC4A1 and is required for high activity of SLC4A1. May be involved in translocation of SLC4A1 to the plasma membrane. The polypeptide is Glycophorin-A (Pan troglodytes (Chimpanzee)).